The sequence spans 302 residues: Proline dehydrogenase 1 (302 aa).

Lysine 95 lines the substrate pocket. The active site involves aspartate 129. FAD is bound by residues methionine 130 and glutamine 158. The active site involves arginine 179. FAD contacts are provided by residues 182-184 and 221-222; these read KGA and TH. 283–284 is a substrate binding site; sequence RR.

The protein belongs to the proline dehydrogenase family. The cofactor is FAD.

It carries out the reaction L-proline + a quinone = (S)-1-pyrroline-5-carboxylate + a quinol + H(+). Its pathway is amino-acid degradation; L-proline degradation into L-glutamate; L-glutamate from L-proline: step 1/2. In terms of biological role, converts proline to delta-1-pyrroline-5-carboxylate. This chain is Proline dehydrogenase 1 (fadM), found in Bacillus subtilis (strain 168).